The following is a 412-amino-acid chain: cAMP-dependent protein kinase regulatory subunit (412 aa).

The dimerization and phosphorylation stretch occupies residues 1 to 142 (MSFEEVYEEL…RLKRSVAGNF (142 aa)). The Pseudophosphorylation motif signature appears at 101–105 (RRQSV). At Ser-104 the chain carries Phosphoserine. Residues 143–277 (LFKN…EEVP), Glu-224, Arg-233, 278–412 (ILSS…STKA), Glu-344, and Arg-353 contribute to the 3',5'-cyclic AMP site. The disordered stretch occupies residues 392–412 (MGMDNEYGDQSLHRSPPSTKA).

The protein belongs to the cAMP-dependent kinase regulatory chain family. Tetramer, composed of 2 regulatory (R) and 2 catalytic (C) subunits. In the presence of cAMP it dissociates into 2 active monomeric C subunits and an R dimer.

The sequence is that of cAMP-dependent protein kinase regulatory subunit (cgs1) from Schizosaccharomyces pombe (strain 972 / ATCC 24843) (Fission yeast).